A 742-amino-acid chain; its full sequence is uncharacterized protein (742 aa).

The segment at 167–471 (GIVPPEPWGH…AAGAAGGGGA (305 aa)) is disordered. Over residues 205 to 218 (PAPPPSLFAPPPPS) the composition is skewed to pro residues. Composition is skewed to polar residues over residues 318 to 331 (SPAT…NAVS) and 358 to 368 (GSPQTLSTAPS). Positions 386–401 (TAGPAAPPTTGGPPAP) are enriched in pro residues. The span at 421–432 (PLSGGVPGGAVP) shows a compositional bias: low complexity. Positions 433 to 447 (LGPPPTPPPAAPVTT) are enriched in pro residues. The segment covering 448-464 (PPLASGAPVAPTGAAAG) has biased composition (low complexity).

Functionally, may be involved in the ESX-1 / type VII specialized secretion system (T7SS), which exports several proteins including EsxA and EsxB. Involved in DNA conjugation in the recipient strain. This is an uncharacterized protein from Mycolicibacterium smegmatis (strain MKD8) (Mycobacterium smegmatis).